Reading from the N-terminus, the 412-residue chain is Tyrosine--tRNA ligase (412 aa).

An L-tyrosine-binding site is contributed by Y31. The 'HIGH' region motif lies at 36–45; that stretch reads PTAPSLHIGH. 2 residues coordinate L-tyrosine: Y162 and Q166. A 'KMSKS' region motif is present at residues 222-226; it reads KIGKT. K225 contacts ATP. The S4 RNA-binding domain maps to 345-411; it reads KRWLDIVVEL…GKRKKQVIDL (67 aa).

Belongs to the class-I aminoacyl-tRNA synthetase family. TyrS type 1 subfamily. As to quaternary structure, homodimer.

The protein localises to the cytoplasm. It catalyses the reaction tRNA(Tyr) + L-tyrosine + ATP = L-tyrosyl-tRNA(Tyr) + AMP + diphosphate + H(+). Functionally, catalyzes the attachment of tyrosine to tRNA(Tyr) in a two-step reaction: tyrosine is first activated by ATP to form Tyr-AMP and then transferred to the acceptor end of tRNA(Tyr). In Chlamydia trachomatis serovar L2 (strain ATCC VR-902B / DSM 19102 / 434/Bu), this protein is Tyrosine--tRNA ligase.